The primary structure comprises 198 residues: Dual specificity protein phosphatase 14 (198 aa).

In terms of domain architecture, Tyrosine-protein phosphatase spans 26 to 167 (GIAQITSSLF…LIDYERQLFG (142 aa)). The active-site Phosphocysteine intermediate is Cys-111.

It belongs to the protein-tyrosine phosphatase family. Non-receptor class dual specificity subfamily. As to quaternary structure, interacts with CD28.

It carries out the reaction O-phospho-L-tyrosyl-[protein] + H2O = L-tyrosyl-[protein] + phosphate. The enzyme catalyses O-phospho-L-seryl-[protein] + H2O = L-seryl-[protein] + phosphate. The catalysed reaction is O-phospho-L-threonyl-[protein] + H2O = L-threonyl-[protein] + phosphate. Functionally, involved in the inactivation of MAP kinases. Dephosphorylates ERK, JNK and p38 MAP-kinases. Plays a negative role in TCR signaling by dephosphorylating MAP3K7 adapter TAB1 leading to its inactivation. This chain is Dual specificity protein phosphatase 14 (DUSP14), found in Bos taurus (Bovine).